The chain runs to 216 residues: Deoxyribose-phosphate aldolase (216 aa).

Asp-89 acts as the Proton donor/acceptor in catalysis. Lys-152 functions as the Schiff-base intermediate with acetaldehyde in the catalytic mechanism. Lys-181 (proton donor/acceptor) is an active-site residue.

This sequence belongs to the DeoC/FbaB aldolase family. DeoC type 1 subfamily.

The protein localises to the cytoplasm. The catalysed reaction is 2-deoxy-D-ribose 5-phosphate = D-glyceraldehyde 3-phosphate + acetaldehyde. It participates in carbohydrate degradation; 2-deoxy-D-ribose 1-phosphate degradation; D-glyceraldehyde 3-phosphate and acetaldehyde from 2-deoxy-alpha-D-ribose 1-phosphate: step 2/2. Its function is as follows. Catalyzes a reversible aldol reaction between acetaldehyde and D-glyceraldehyde 3-phosphate to generate 2-deoxy-D-ribose 5-phosphate. In Clostridium tetani (strain Massachusetts / E88), this protein is Deoxyribose-phosphate aldolase.